The chain runs to 492 residues: Polyamine oxidase 5 (492 aa).

4 residues coordinate FAD: E55, R63, V244, and E431. Positions 490 to 492 (SRL) match the Microbody targeting signal motif.

It belongs to the flavin monoamine oxidase family. Requires FAD as cofactor. Widely expressed.

The protein localises to the peroxisome. The enzyme catalyses spermine + O2 + H2O = 3-aminopropanal + spermidine + H2O2. It catalyses the reaction norspermine + O2 + H2O = norspermidine + 3-aminopropanal + H2O2. The catalysed reaction is thermospermine + O2 + H2O = 3-aminopropanal + spermidine + H2O2. The protein operates within amine and polyamine degradation; spermine degradation. Functionally, flavoenzyme involved in polyamine back-conversion. Catalyzes the oxidation of the secondary amino group of polyamines, such as spermine. Substrate preference is spermine &gt; thermospermine &gt; norspermine. No activity detected when putrescine, spermidine or N(1)-acetylspermidine are used as substrates. Plays an important role in the regulation of polyamine intracellular concentration. May play a role in producing hydrogen peroxide during seed germination. This chain is Polyamine oxidase 5, found in Oryza sativa subsp. japonica (Rice).